Here is a 133-residue protein sequence, read N- to C-terminus: Putative esterase TV1331 (133 aa).

Belongs to the thioesterase PaaI family.

The sequence is that of Putative esterase TV1331 from Thermoplasma volcanium (strain ATCC 51530 / DSM 4299 / JCM 9571 / NBRC 15438 / GSS1).